The following is a 415-amino-acid chain: Gamma-glutamyl phosphate reductase (415 aa).

The protein belongs to the gamma-glutamyl phosphate reductase family.

The protein resides in the cytoplasm. It catalyses the reaction L-glutamate 5-semialdehyde + phosphate + NADP(+) = L-glutamyl 5-phosphate + NADPH + H(+). The protein operates within amino-acid biosynthesis; L-proline biosynthesis; L-glutamate 5-semialdehyde from L-glutamate: step 2/2. Catalyzes the NADPH-dependent reduction of L-glutamate 5-phosphate into L-glutamate 5-semialdehyde and phosphate. The product spontaneously undergoes cyclization to form 1-pyrroline-5-carboxylate. The chain is Gamma-glutamyl phosphate reductase from Listeria welshimeri serovar 6b (strain ATCC 35897 / DSM 20650 / CCUG 15529 / CIP 8149 / NCTC 11857 / SLCC 5334 / V8).